We begin with the raw amino-acid sequence, 538 residues long: Chaperonin GroEL (538 aa).

Residues 29-32, 86-90, Gly413, 476-478, and Asp492 each bind ATP; these read TIGP, DGTTT, and NAA.

The protein belongs to the chaperonin (HSP60) family. In terms of assembly, forms a cylinder of 14 subunits composed of two heptameric rings stacked back-to-back. Interacts with the co-chaperonin GroES.

The protein localises to the cytoplasm. It carries out the reaction ATP + H2O + a folded polypeptide = ADP + phosphate + an unfolded polypeptide.. In terms of biological role, together with its co-chaperonin GroES, plays an essential role in assisting protein folding. The GroEL-GroES system forms a nano-cage that allows encapsulation of the non-native substrate proteins and provides a physical environment optimized to promote and accelerate protein folding. This is Chaperonin GroEL from Staphylococcus aureus (strain NCTC 8325 / PS 47).